A 215-amino-acid polypeptide reads, in one-letter code: Sodium channel regulatory subunit beta-3 (215 aa).

The first 22 residues, 1-22 (MPAFNRLFPLASLLLILWVGVC), serve as a signal peptide directing secretion. Residues 23–156 (FPVCVEVPSE…EEAGEDFTSV (134 aa)) lie on the Extracellular side of the membrane. 2 disulfide bridges follow: cysteine 26/cysteine 48 and cysteine 45/cysteine 120. The region spanning 32–154 (ETEAVQGNPM…VTEEAGEDFT (123 aa)) is the Ig-like C2-type domain. Residues asparagine 95, asparagine 109, asparagine 113, and asparagine 121 are each glycosylated (N-linked (GlcNAc...) asparagine). Residues 157–178 (VSEIMMYILLVFLTLWLLIEMI) traverse the membrane as a helical segment. Residues 179-215 (YCYRKVSKAEEAAQENASDYLAIPSENKENSAVPVEE) are Cytoplasmic-facing.

The protein belongs to the sodium channel auxiliary subunit SCN3B (TC 8.A.17) family. In terms of assembly, a voltage-gated sodium (Nav) channel consists of an ion-conducting pore-forming alpha subunit functional on its own that is regulated by one or more beta subunits. Forms homodimers and homotrimers. SCN3B is non-covalently associated with alpha subunits and induces the formation of alpha subunit oligomers, including trimers. Interacts with SCN5A/Nav1.5; regulatory subunit of SCN5A/Nav1.5. Interacts with SCN7A/Nav2.1; probable regulatory subunit of SCN7A/Nav2.1. Interacts with SCN10A; regulatory subunit of SCN10A/Nav1.8. Interacts with NFASC; probably involved in targeting the sodium channels to the nodes of Ranvier. Intramolecular disulfide bonds favor the voltage-gated sodium channel oligomeric complex assembly. In terms of processing, N-glycosylated.

The protein localises to the cell membrane. In terms of biological role, regulatory subunit of multiple voltage-gated sodium (Nav) channels directly mediating the depolarization of excitable membranes. Navs, also called VGSCs (voltage-gated sodium channels) or VDSCs (voltage-dependent sodium channels), operate by switching between closed and open conformations depending on the voltage difference across the membrane. In the open conformation they allow Na(+) ions to selectively pass through the pore, along their electrochemical gradient. The influx of Na+ ions provokes membrane depolarization, initiating the propagation of electrical signals throughout cells and tissues. The accessory beta subunits participate in localization and functional modulation of the Nav channels. Modulates the activity of SCN2A/Nav1.2, causing a hyperpolarizing shift in the voltage-dependence of inactivation of the channel and increasing the fraction of channels operating in the fast gating mode. Modulates the activity of SCN5A/Nav1.5. Could also regulate the atypical sodium channel SCN7A/Nav2.1. Modulates the activity of SCN10A/Nav1.8, regulating its oligomerization and accelerating the recovery from inactivation. This is Sodium channel regulatory subunit beta-3 from Bos taurus (Bovine).